The following is an 829-amino-acid chain: Periplasmic nitrate reductase (829 aa).

Residues 1 to 36 constitute a signal peptide (tat-type signal); it reads MARRDFIKQTAAAAAATVAGVPLTGYTQNIVTESEA. The region spanning 39-95 is the 4Fe-4S Mo/W bis-MGD-type domain; the sequence is LKWSKAPCRFCGTGCGVNVAVKDNQVVATHGDFNAEVNKGLNCVKGYFLSKIMYGSD. The [4Fe-4S] cluster site is built by Cys46, Cys49, Cys53, and Cys81. Residues Lys83, Gln150, Asn175, Cys179, 212–219, 243–247, 262–264, Met373, Gln377, Asn483, 509–510, Lys532, Asp559, and 719–728 contribute to the Mo-bis(molybdopterin guanine dinucleotide) site; these read WGSNMAEM, STFEH, QSD, SD, and TGRVLEHWHS. Residue Trp795 participates in substrate binding. Residues Asn803 and Lys820 each coordinate Mo-bis(molybdopterin guanine dinucleotide).

Belongs to the prokaryotic molybdopterin-containing oxidoreductase family. NasA/NapA/NarB subfamily. Component of the periplasmic nitrate reductase NapAB complex composed of NapA and NapB. Requires [4Fe-4S] cluster as cofactor. The cofactor is Mo-bis(molybdopterin guanine dinucleotide). Post-translationally, predicted to be exported by the Tat system. The position of the signal peptide cleavage has not been experimentally proven.

The protein resides in the periplasm. It carries out the reaction 2 Fe(II)-[cytochrome] + nitrate + 2 H(+) = 2 Fe(III)-[cytochrome] + nitrite + H2O. Functionally, catalytic subunit of the periplasmic nitrate reductase complex NapAB. Receives electrons from NapB and catalyzes the reduction of nitrate to nitrite. The protein is Periplasmic nitrate reductase of Bordetella bronchiseptica (strain ATCC BAA-588 / NCTC 13252 / RB50) (Alcaligenes bronchisepticus).